A 167-amino-acid chain; its full sequence is NAD(P)H-quinone oxidoreductase subunit I, chloroplastic (167 aa).

2 4Fe-4S ferredoxin-type domains span residues 55 to 84 (GRIHFEFDKCIACEVCVRVCPIDLPVVDWK) and 95 to 124 (LNYSIDFGICIFCGNCVEYCPTNCLSMTEE). [4Fe-4S] cluster-binding residues include cysteine 64, cysteine 67, cysteine 70, cysteine 74, cysteine 104, cysteine 107, cysteine 110, and cysteine 114.

Belongs to the complex I 23 kDa subunit family. NDH is composed of at least 16 different subunits, 5 of which are encoded in the nucleus. It depends on [4Fe-4S] cluster as a cofactor.

It is found in the plastid. The protein resides in the chloroplast thylakoid membrane. It catalyses the reaction a plastoquinone + NADH + (n+1) H(+)(in) = a plastoquinol + NAD(+) + n H(+)(out). The enzyme catalyses a plastoquinone + NADPH + (n+1) H(+)(in) = a plastoquinol + NADP(+) + n H(+)(out). Functionally, NDH shuttles electrons from NAD(P)H:plastoquinone, via FMN and iron-sulfur (Fe-S) centers, to quinones in the photosynthetic chain and possibly in a chloroplast respiratory chain. The immediate electron acceptor for the enzyme in this species is believed to be plastoquinone. Couples the redox reaction to proton translocation, and thus conserves the redox energy in a proton gradient. This chain is NAD(P)H-quinone oxidoreductase subunit I, chloroplastic, found in Aethionema grandiflorum (Persian stone-cress).